Consider the following 227-residue polypeptide: Ribonuclease 3 (227 aa).

Residues 7-132 form the RNase III domain; that stretch reads LTAFMDRLGY…VIAAVYLDGG (126 aa). A Mg(2+)-binding site is contributed by Glu-45. Asp-49 is a catalytic residue. The Mg(2+) site is built by Asp-118 and Glu-121. The active site involves Glu-121. The region spanning 157 to 226 is the DRBM domain; sequence DAKTALQEWA…AKDLLAQLAG (70 aa).

This sequence belongs to the ribonuclease III family. In terms of assembly, homodimer. Mg(2+) is required as a cofactor.

The protein resides in the cytoplasm. The enzyme catalyses Endonucleolytic cleavage to 5'-phosphomonoester.. In terms of biological role, digests double-stranded RNA. Involved in the processing of primary rRNA transcript to yield the immediate precursors to the large and small rRNAs (23S and 16S). Processes some mRNAs, and tRNAs when they are encoded in the rRNA operon. Processes pre-crRNA and tracrRNA of type II CRISPR loci if present in the organism. This is Ribonuclease 3 from Jannaschia sp. (strain CCS1).